Consider the following 144-residue polypeptide: UPF0102 protein BURPS1106A_3900 (144 aa).

Positions methionine 1 to serine 28 are disordered.

The protein belongs to the UPF0102 family.

This chain is UPF0102 protein BURPS1106A_3900, found in Burkholderia pseudomallei (strain 1106a).